A 297-amino-acid polypeptide reads, in one-letter code: 33 kDa chaperonin (297 aa).

Disulfide bonds link Cys-232–Cys-234 and Cys-266–Cys-269.

This sequence belongs to the HSP33 family. Post-translationally, under oxidizing conditions two disulfide bonds are formed involving the reactive cysteines. Under reducing conditions zinc is bound to the reactive cysteines and the protein is inactive.

It is found in the cytoplasm. Functionally, redox regulated molecular chaperone. Protects both thermally unfolding and oxidatively damaged proteins from irreversible aggregation. Plays an important role in the bacterial defense system toward oxidative stress. The protein is 33 kDa chaperonin of Pseudomonas aeruginosa (strain UCBPP-PA14).